We begin with the raw amino-acid sequence, 330 residues long: Cyclic AMP receptor-like protein E (330 aa).

Residues 1–10 (MLSLSSYVLN) are Extracellular-facing. Residues 11 to 31 (LVGSILCLIGCLFIIGHFFWI) traverse the membrane as a helical segment. At 32–40 (PLLRTSLSR) the chain is on the cytoplasmic side. Residues 41–61 (IIIYPTFILLLYDMVSFPSFI) form a helical membrane-spanning segment. Over 62 to 85 (SKTADLYIERSTIICNFQEAIIQY) the chain is Extracellular. Residues 86 to 106 (LILSNFIWSVCISVNLLYLCF) form a helical membrane-spanning segment. Topologically, residues 107–116 (SPNKNLKKNE) are cytoplasmic. Residues 117 to 137 (LLYHLCSWGIPLIVVVITKIP) traverse the membrane as a helical segment. At 138–156 (NMISDNGNQCRFKSPNYIK) the chain is on the extracellular side. The helical transmembrane segment at 157 to 177 (FYLETILFIAFMLFNFIVAFI) threads the bilayer. Over 178-213 (TIKHIISGNLRESETTTTSVLFVNEKKITTKKIVWR) the chain is Cytoplasmic. Residues 214–234 (LLLYPSILSICYIMTLVLSIY) form a helical membrane-spanning segment. Residues 235–274 (QFSTESYGSGGAYANSINNKRNDKNTESGNSNNNNNSYIE) lie on the Extracellular side of the membrane. The N-linked (GlcNAc...) asparagine glycan is linked to Asn269. The chain crosses the membrane as a helical span at residues 275 to 295 (ILLYISKAIFLLQGFFNALVY). The Cytoplasmic portion of the chain corresponds to 296–330 (LRSSKLRDRYKKITIFRKIFWRDEADYQSINDGFN).

Belongs to the G-protein coupled receptor 5 family.

Its subcellular location is the membrane. Functionally, receptor for cAMP. This is Cyclic AMP receptor-like protein E (crlE) from Dictyostelium discoideum (Social amoeba).